Consider the following 267-residue polypeptide: Transmembrane protein 106B (267 aa).

The Cytoplasmic portion of the chain corresponds to 1–92 (MGKALSHVAK…QRLRPRRTKL (92 aa)). A helical transmembrane segment spans residues 93 to 113 (YVMASVILCLLLCTLAVFFLF). Topologically, residues 114-267 (PRSIDVNYVG…EYSLNTPLTG (154 aa)) are lumenal. 4 N-linked (GlcNAc...) asparagine glycosylation sites follow: Asn-141, Asn-147, Asn-160, and Asn-179. A disulfide bond links Cys-210 and Cys-249. N-linked (GlcNAc...) asparagine glycosylation is present at Asn-252.

Belongs to the TMEM106 family.

It is found in the late endosome membrane. The protein resides in the lysosome membrane. The protein localises to the cell membrane. In neurons, involved in the transport of late endosomes/lysosomes. May be involved in dendrite morphogenesis and maintenance by regulating lysosomal trafficking. May act as a molecular brake for retrograde transport of late endosomes/lysosomes, possibly via its interaction with MAP6. In motoneurons, may mediate the axonal transport of lysosomes and axonal sorting at the initial segment. It remains unclear whether TMEM106B affects the transport of moving lysosomes in the anterograde or retrograde direction in neurites and whether it is particularly important in the sorting of lysosomes in axons or in dendrites. In neurons, may also play a role in the regulation of lysosomal size and responsiveness to stress. Required for proper lysosomal acidification. This is Transmembrane protein 106B (tmem106b) from Danio rerio (Zebrafish).